The primary structure comprises 720 residues: Dedicator of cytokinesis protein 9 (720 aa).

The DOCKER domain maps to 186-638 (KSYASTPELR…LSDIIVPRIC (453 aa)). An interaction with CDC42 region spans residues 277–638 (DEEASMMEDV…LSDIIVPRIC (362 aa)).

The protein belongs to the DOCK family. As to quaternary structure, homodimer. Interacts preferentially with nucleotide-depleted CDC42.

The protein localises to the endomembrane system. Functionally, guanine nucleotide-exchange factor (GEF) that activates CDC42 by exchanging bound GDP for free GTP. Overexpression induces filopodia formation. The protein is Dedicator of cytokinesis protein 9 (Dock9) of Rattus norvegicus (Rat).